The sequence spans 587 residues: Cyclic GMP-AMP synthase-like receptor (587 aa).

Disordered stretches follow at residues 26-48 (IHPS…RRDD) and 77-229 (TRMH…DRPL). 3 stretches are compositionally biased toward basic and acidic residues: residues 95-138 (TRDR…RDSL), 150-185 (DGAR…RESL), and 204-228 (PESR…HDRP). Positions 307, 309, and 409 each coordinate Mg(2+).

It belongs to the mab-21 family. Mg(2+) serves as cofactor. It depends on Mn(2+) as a cofactor.

It catalyses the reaction UTP + ATP = 2',3'-cUAMP + 2 diphosphate. Functionally, nucleotidyltransferase that catalyzes the formation of cyclic UMP-AMP (2',3'-cUAMP) from ATP and UTP and plays a key role in innate immunity. Acts as a key sensor of double-stranded DNA (dsDNA), the presence of dsDNA in the cytoplasm being a danger signal that triggers the immune responses. Directly binds dsDNA, activating the nucleotidyltransferase activity, leading to synthesis of 2',3'-cUAMP, a second messenger that binds to and activates Sting, thereby triggering the immune response via activation of the NF-kappa-B transcription factor. The chain is Cyclic GMP-AMP synthase-like receptor from Magallana gigas (Pacific oyster).